Here is a 434-residue protein sequence, read N- to C-terminus: D-amino acid dehydrogenase (434 aa).

3–17 contacts FAD; sequence VLVLGSGVIGTTSAW.

The protein belongs to the DadA oxidoreductase family. FAD serves as cofactor.

The enzyme catalyses a D-alpha-amino acid + A + H2O = a 2-oxocarboxylate + AH2 + NH4(+). Its pathway is amino-acid degradation; D-alanine degradation; NH(3) and pyruvate from D-alanine: step 1/1. Its function is as follows. Oxidative deamination of D-amino acids. The sequence is that of D-amino acid dehydrogenase from Stenotrophomonas maltophilia (strain K279a).